The primary structure comprises 391 residues: Succinyl-diaminopimelate desuccinylase (391 aa).

H78 provides a ligand contact to Zn(2+). D80 is a catalytic residue. Residue D111 coordinates Zn(2+). E145 acts as the Proton acceptor in catalysis. Positions 146, 174, and 360 each coordinate Zn(2+).

The protein belongs to the peptidase M20A family. DapE subfamily. In terms of assembly, homodimer. Zn(2+) is required as a cofactor. Requires Co(2+) as cofactor.

The enzyme catalyses N-succinyl-(2S,6S)-2,6-diaminopimelate + H2O = (2S,6S)-2,6-diaminopimelate + succinate. The protein operates within amino-acid biosynthesis; L-lysine biosynthesis via DAP pathway; LL-2,6-diaminopimelate from (S)-tetrahydrodipicolinate (succinylase route): step 3/3. Its function is as follows. Catalyzes the hydrolysis of N-succinyl-L,L-diaminopimelic acid (SDAP), forming succinate and LL-2,6-diaminopimelate (DAP), an intermediate involved in the bacterial biosynthesis of lysine and meso-diaminopimelic acid, an essential component of bacterial cell walls. This is Succinyl-diaminopimelate desuccinylase from Acidovorax ebreus (strain TPSY) (Diaphorobacter sp. (strain TPSY)).